We begin with the raw amino-acid sequence, 307 residues long: Methionyl-tRNA formyltransferase (307 aa).

108-111 serves as a coordination point for (6S)-5,6,7,8-tetrahydrofolate; the sequence is SLLP.

This sequence belongs to the Fmt family.

The enzyme catalyses L-methionyl-tRNA(fMet) + (6R)-10-formyltetrahydrofolate = N-formyl-L-methionyl-tRNA(fMet) + (6S)-5,6,7,8-tetrahydrofolate + H(+). Its function is as follows. Attaches a formyl group to the free amino group of methionyl-tRNA(fMet). The formyl group appears to play a dual role in the initiator identity of N-formylmethionyl-tRNA by promoting its recognition by IF2 and preventing the misappropriation of this tRNA by the elongation apparatus. The protein is Methionyl-tRNA formyltransferase of Xylella fastidiosa (strain M12).